The chain runs to 500 residues: Putative (R)-citramalate synthase CimA (500 aa).

A Pyruvate carboxyltransferase domain is found at 9–258 (LRFFDTTLRD…DTRIRTERLY (250 aa)).

It belongs to the alpha-IPM synthase/homocitrate synthase family. In terms of assembly, homodimer.

The catalysed reaction is pyruvate + acetyl-CoA + H2O = (3R)-citramalate + CoA + H(+). It participates in amino-acid biosynthesis; L-isoleucine biosynthesis; 2-oxobutanoate from pyruvate: step 1/3. Functionally, catalyzes the condensation of pyruvate and acetyl-coenzyme A to form (R)-citramalate. The chain is Putative (R)-citramalate synthase CimA from Methanosphaerula palustris (strain ATCC BAA-1556 / DSM 19958 / E1-9c).